The sequence spans 335 residues: tRNA N6-adenosine threonylcarbamoyltransferase (335 aa).

Fe cation contacts are provided by histidine 112 and histidine 116. Residues 134-138 (VVSGG), aspartate 167, glycine 180, and asparagine 273 contribute to the substrate site. Fe cation is bound at residue aspartate 301.

The protein belongs to the KAE1 / TsaD family. The cofactor is Fe(2+).

It localises to the cytoplasm. It catalyses the reaction L-threonylcarbamoyladenylate + adenosine(37) in tRNA = N(6)-L-threonylcarbamoyladenosine(37) in tRNA + AMP + H(+). In terms of biological role, required for the formation of a threonylcarbamoyl group on adenosine at position 37 (t(6)A37) in tRNAs that read codons beginning with adenine. Is involved in the transfer of the threonylcarbamoyl moiety of threonylcarbamoyl-AMP (TC-AMP) to the N6 group of A37, together with TsaE and TsaB. TsaD likely plays a direct catalytic role in this reaction. The polypeptide is tRNA N6-adenosine threonylcarbamoyltransferase (Shouchella clausii (strain KSM-K16) (Alkalihalobacillus clausii)).